Here is a 96-residue protein sequence, read N- to C-terminus: MPGEIQVEVAYALPEKQYLRKVKLPEGASVEEAIIASGLLELRKDIDLKKNKVGIYSRPVKLADTLNDGDRVEIYRPLIADPKELRRQRAERAAKK.

This sequence belongs to the UPF0125 (RnfH) family.

The chain is Protein RnfH from Cronobacter sakazakii (strain ATCC BAA-894) (Enterobacter sakazakii).